The following is a 262-amino-acid chain: Hemin import ATP-binding protein HmuV (262 aa).

One can recognise an ABC transporter domain in the interval 5–242 (LEARKAGFAT…ELIGAVFDVE (238 aa)). 37–44 (GPNGAGKS) is a binding site for ATP.

The protein belongs to the ABC transporter superfamily. Heme (hemin) importer (TC 3.A.1.14.5) family. As to quaternary structure, the complex is composed of two ATP-binding proteins (HmuV), two transmembrane proteins (HmuU) and a solute-binding protein (HmuT).

The protein resides in the cell inner membrane. Part of the ABC transporter complex HmuTUV involved in hemin import. Responsible for energy coupling to the transport system. This is Hemin import ATP-binding protein HmuV from Rhodopseudomonas palustris (strain HaA2).